We begin with the raw amino-acid sequence, 159 residues long: ATP synthase subunit b (159 aa).

A helical membrane pass occupies residues 7 to 27; the sequence is VIFMTIINFCILVAILKHFFW.

This sequence belongs to the ATPase B chain family. F-type ATPases have 2 components, F(1) - the catalytic core - and F(0) - the membrane proton channel. F(1) has five subunits: alpha(3), beta(3), gamma(1), delta(1), epsilon(1). F(0) has three main subunits: a(1), b(2) and c(10-14). The alpha and beta chains form an alternating ring which encloses part of the gamma chain. F(1) is attached to F(0) by a central stalk formed by the gamma and epsilon chains, while a peripheral stalk is formed by the delta and b chains.

Its subcellular location is the cell membrane. Functionally, f(1)F(0) ATP synthase produces ATP from ADP in the presence of a proton or sodium gradient. F-type ATPases consist of two structural domains, F(1) containing the extramembraneous catalytic core and F(0) containing the membrane proton channel, linked together by a central stalk and a peripheral stalk. During catalysis, ATP synthesis in the catalytic domain of F(1) is coupled via a rotary mechanism of the central stalk subunits to proton translocation. Component of the F(0) channel, it forms part of the peripheral stalk, linking F(1) to F(0). This is ATP synthase subunit b from Clostridium botulinum (strain Alaska E43 / Type E3).